The primary structure comprises 292 residues: Nitrogenase iron protein 2 (292 aa).

8-15 (GKGGIGKS) lines the ATP pocket. Cysteine 106 is a [4Fe-4S] cluster binding site. Residue arginine 109 is modified to ADP-ribosylarginine; by dinitrogenase reductase ADP-ribosyltransferase. Position 142 (cysteine 142) interacts with [4Fe-4S] cluster.

The protein belongs to the NifH/BchL/ChlL family. In terms of assembly, homodimer. Requires [4Fe-4S] cluster as cofactor. Post-translationally, the reversible ADP-ribosylation of Arg-109 inactivates the nitrogenase reductase and regulates nitrogenase activity.

It carries out the reaction N2 + 8 reduced [2Fe-2S]-[ferredoxin] + 16 ATP + 16 H2O = H2 + 8 oxidized [2Fe-2S]-[ferredoxin] + 2 NH4(+) + 16 ADP + 16 phosphate + 6 H(+). Functionally, the key enzymatic reactions in nitrogen fixation are catalyzed by the nitrogenase complex, which has 2 components: the iron protein and the molybdenum-iron protein. The sequence is that of Nitrogenase iron protein 2 (nifH2) from Methanothermococcus thermolithotrophicus (Methanococcus thermolithotrophicus).